Here is a 343-residue protein sequence, read N- to C-terminus: Probable dual-specificity RNA methyltransferase RlmN (343 aa).

Catalysis depends on E91, which acts as the Proton acceptor. Residues 97–326 (HPGRITACIS…AEIRQEKGSD (230 aa)) form the Radical SAM core domain. C104 and C331 are joined by a disulfide. Residues C111, C115, and C118 each coordinate [4Fe-4S] cluster. S-adenosyl-L-methionine contacts are provided by residues 158 to 159 (GE), S190, 213 to 215 (SLH), and N289. The S-methylcysteine intermediate role is filled by C331.

The protein belongs to the radical SAM superfamily. RlmN family. Requires [4Fe-4S] cluster as cofactor.

The protein localises to the cytoplasm. It carries out the reaction adenosine(2503) in 23S rRNA + 2 reduced [2Fe-2S]-[ferredoxin] + 2 S-adenosyl-L-methionine = 2-methyladenosine(2503) in 23S rRNA + 5'-deoxyadenosine + L-methionine + 2 oxidized [2Fe-2S]-[ferredoxin] + S-adenosyl-L-homocysteine. The enzyme catalyses adenosine(37) in tRNA + 2 reduced [2Fe-2S]-[ferredoxin] + 2 S-adenosyl-L-methionine = 2-methyladenosine(37) in tRNA + 5'-deoxyadenosine + L-methionine + 2 oxidized [2Fe-2S]-[ferredoxin] + S-adenosyl-L-homocysteine. Specifically methylates position 2 of adenine 2503 in 23S rRNA and position 2 of adenine 37 in tRNAs. The protein is Probable dual-specificity RNA methyltransferase RlmN of Thermotoga neapolitana (strain ATCC 49049 / DSM 4359 / NBRC 107923 / NS-E).